The sequence spans 141 residues: Galactose-6-phosphate isomerase subunit LacA 1 (141 aa).

This sequence belongs to the LacAB/RpiB family. In terms of assembly, heteromultimeric protein consisting of LacA and LacB.

The enzyme catalyses aldehydo-D-galactose 6-phosphate = keto-D-tagatose 6-phosphate. Its pathway is carbohydrate metabolism; D-galactose 6-phosphate degradation; D-tagatose 6-phosphate from D-galactose 6-phosphate: step 1/1. This Streptococcus pyogenes serotype M18 (strain MGAS8232) protein is Galactose-6-phosphate isomerase subunit LacA 1.